We begin with the raw amino-acid sequence, 906 residues long: MPLRLDIKRKLTARSDRVKSVDLHPTEPWMLASLYNGSVCVWNHETQTLVKTFEVCDLPVRAAKFVARKNWVVTGADDMQIRVFNYNTLERVHMFEAHSDYIRCIAVHPTQPFILTSSDDMLIKLWDWDKKWSCSQVFEGHTHYVMQIVINPKDNNQFASASLDRTIKVWQLGSSSPNFTLEGHEKGVNCIDYYSGGDKPYLISGADDRLVKIWDYQNKTCVQTLEGHAQNVSCASFHPELPIIITGSEDGTVRIWHSSTYRLESTLNYGMERVWCVASLRGSNNVALGYDEGSIIVKLGREEPAMSMDANGKIIWAKHSEVQQANLKAMGDAEIKDGERLPLAVKDMGSCEIYPQTIQHNPNGRFVVVCGDGEYIIYTAMALRNKSFGSAQEFAWAHDSSEYAIRESNSIVKIFKNFKEKKSFKPDFGAESIYGGFLLGVRSVNGLAFYDWDNTELIRRIEIQPKHIFWSDSGELVCIATEESFFILKYLSEKVLAVQETHEGVTEDGIEDAFEVLGEIQEIVKTGLWVGDCFIYTSSVNRLNYYVGGEIVTIAHLDRTMYLLGYIPKDNRLYLGDKELNIVSYSLLVSVLEYQTAVMRRDFSMADKVLPTIPKEQRTRVAHFLEKQGFKQQALTVSTDPEHRFELALQLGELKIAYQLAVEAESEQKWKQLAELAISKCQFGLAQECLHHAQDYGGLLLLATASGNANMVNKLAEGAERDGKNNVAFMSYFLQGKVDACLELLIRTGRLPEAAFLARTYLPSQVSRVVKLWRENLSKVNQKAAESLADPTEYENLFPGLKEAFVVEEWVKETHAELWPAKQYPLVTPNEERNVMEEAKGFQPSRSTAQQELDGKPASPTPVIVASHTANKEEKSLLELEVDLDNLELVDIDTTDINLDEDILDD.

8 WD repeats span residues 13–52, 55–94, 97–136, 140–180, 183–224, 227–266, 350–388, and 390–425; these read ARSD…LVKT, VCDL…RVHM, AHSD…SCSQ, GHTH…PNFT, GHEK…CVQT, GHAQ…LEST, SCEI…NKSF, and SAQE…KSFK. K627 is modified (N6-acetyllysine). The WD 9 repeat unit spans residues 746–783; it reads IRTGRLPEAAFLARTYLPSQVSRVVKLWRENLSKVNQK. Residues 837-863 are disordered; the sequence is EEAKGFQPSRSTAQQELDGKPASPTPV. S859 carries the phosphoserine modification. T861 carries the post-translational modification Phosphothreonine. Residues 866-890 are a coiled coil; the sequence is ASHTANKEEKSLLELEVDLDNLELV.

The protein belongs to the WD repeat COPB2 family. As to quaternary structure, oligomeric complex that consists of at least the alpha, beta, beta', gamma, delta, epsilon and zeta subunits. Probably interacts with PEX11A. Interacts with SCYL1. Interacts with JAGN1.

The protein resides in the cytoplasm. Its subcellular location is the cytosol. It is found in the golgi apparatus membrane. It localises to the cytoplasmic vesicle. The protein localises to the COPI-coated vesicle membrane. The coatomer is a cytosolic protein complex that binds to dilysine motifs and reversibly associates with Golgi non-clathrin-coated vesicles, which further mediate biosynthetic protein transport from the ER, via the Golgi up to the trans Golgi network. Coatomer complex is required for budding from Golgi membranes, and is essential for the retrograde Golgi-to-ER transport of dilysine-tagged proteins. In mammals, the coatomer can only be recruited by membranes associated to ADP-ribosylation factors (ARFs), which are small GTP-binding proteins; the complex also influences the Golgi structural integrity, as well as the processing, activity, and endocytic recycling of LDL receptors. Functionally, this coatomer complex protein, essential for Golgi budding and vesicular trafficking, is a selective binding protein (RACK) for protein kinase C, epsilon type. It binds to Golgi membranes in a GTP-dependent manner. The protein is Coatomer subunit beta' (COPB2) of Pongo abelii (Sumatran orangutan).